Reading from the N-terminus, the 258-residue chain is Acetylglutamate kinase (258 aa).

Residues 44-45 (GG), arginine 66, and asparagine 158 each bind substrate. Residues 181 to 186 (DISSIL) and 209 to 211 (IIT) each bind ATP.

This sequence belongs to the acetylglutamate kinase family. ArgB subfamily. In terms of assembly, homodimer.

Its subcellular location is the cytoplasm. The catalysed reaction is N-acetyl-L-glutamate + ATP = N-acetyl-L-glutamyl 5-phosphate + ADP. It participates in amino-acid biosynthesis; L-arginine biosynthesis; N(2)-acetyl-L-ornithine from L-glutamate: step 2/4. Catalyzes the ATP-dependent phosphorylation of N-acetyl-L-glutamate. The protein is Acetylglutamate kinase of Buchnera aphidicola subsp. Schizaphis graminum (strain Sg).